The chain runs to 595 residues: Phenylalanine--tRNA ligase beta subunit (595 aa).

Residues 86 to 90 (KLSKP) form a 3'-CCA residue in tRNA region. A B5 domain is found at 292 to 370 (FNDRIMDVSI…VGYGFNNLPK (79 aa)). The Mg(2+) site is built by D348, D354, E357, and D358.

Belongs to the phenylalanyl-tRNA synthetase beta subunit family. Type 2 subfamily. In terms of assembly, tetramer of two alpha and two beta subunits. It depends on Mg(2+) as a cofactor.

It is found in the cytoplasm. The enzyme catalyses tRNA(Phe) + L-phenylalanine + ATP = L-phenylalanyl-tRNA(Phe) + AMP + diphosphate + H(+). This is Phenylalanine--tRNA ligase beta subunit (FRS1) from Saccharomyces cerevisiae (strain ATCC 204508 / S288c) (Baker's yeast).